Consider the following 320-residue polypeptide: Stress-induced-phosphoprotein 1 (320 aa).

TPR repeat units follow at residues 5 to 38, 40 to 72, 80 to 113, 140 to 173, 175 to 207, and 208 to 241; these read AIAE…DPSN, TFYN…GRET, AKAM…FRDP, AQEE…DPEN, ILYS…DSKF, and IKGY…DPSN. The tract at residues 241–269 is disordered; sequence NEEAREGVRNCLRSNDEDPEKAKERSLAD. Residues 242-269 show a composition bias toward basic and acidic residues; the sequence is EEAREGVRNCLRSNDEDPEKAKERSLAD. Residues 269–308 form the STI1 domain; sequence DPEVQEILRDPGMRMILEQMSNDPGAVREHLKNPEIFQKL.

In terms of assembly, forms a complex with hsp-1/hsp70 and daf-21/hsp90. Interacts with daf-21/hsp90 (via the C-terminal MEEVD pentapeptide). As to expression, expressed ubiquitously in the whole body. Detected predominantly in the pharyngeal muscles, vulva epithelial cells, striated body-wall muscles, spermathecae and intestinal cell ring. Also observed in the tail regions of hermaphrodite and in the sensory rays and spicules of males.

It is found in the cytoplasm. In terms of biological role, plays a role in gonad development. Up-regulates longevity and thermotolerance. Binds daf-21/hsp90 and inhibits its ATPase activity. In Caenorhabditis elegans, this protein is Stress-induced-phosphoprotein 1.